Reading from the N-terminus, the 360-residue chain is Glucan endo-1,3-beta-glucosidase B (360 aa).

A signal peptide spans 1-25 (MATSQIAIIVLLGLLVATNIHITEA). Q26 carries the pyrrolidone carboxylic acid modification. The Proton donor role is filled by E120. E265 functions as the Nucleophile in the catalytic mechanism. The propeptide at 341–360 (VSERVWDITNSTASSLTSEI) is removed in mature form. N350 carries an N-linked (GlcNAc...) asparagine glycan.

It belongs to the glycosyl hydrolase 17 family.

The protein resides in the vacuole. It carries out the reaction Hydrolysis of (1-&gt;3)-beta-D-glucosidic linkages in (1-&gt;3)-beta-D-glucans.. Functionally, implicated in the defense of plants against pathogens. The chain is Glucan endo-1,3-beta-glucosidase B from Solanum lycopersicum (Tomato).